Here is a 175-residue protein sequence, read N- to C-terminus: Heme-dependent oxidative N-demethylase delta subunit (175 aa).

The heme-dependent oxidative N-demethylase (HODM) is a heterotetramer composed of a catalytic alpha subunit, a FMN/2Fe-2S-dependent oxidoreductase beta subunit, a gamma subunit with putative aminotransferase activity, and a delta subunit of unknown function.

Its function is as follows. Component of the heme-dependent oxidative N-demethylase (HODM) enzyme, that catalyzes the NADPH-dependent oxidation of dimethylamine (DMA) to methylamine (MA) and formaldehyde. Functions in bacterial methylated amine catabolism, linking alkylamine oxidation to the tetrahydrofolate C1 pool. The function of the delta subunit is unknown. This is Heme-dependent oxidative N-demethylase delta subunit from Ectopseudomonas mendocina (strain ymp) (Pseudomonas mendocina).